We begin with the raw amino-acid sequence, 600 residues long: MNKNITIDELRSKYIDFFKSKGHVEISGRSLIPENDPTVLFTTAGMHPLVPYLMGEPHPAGTRLTDVQKCVRTGDIDDVGDASHLTFFEMLGNWSLGDYFKKESIAYSFEFLTDEKYLGIPIDKLSFTVFEGNEDAPRDEESASIWESLGVSKDRIFFLPKEDNWWGPAGETGPCGPDTEIFIDTGKPACGSNCRPGCNCGKYVEIWNNVFMQYHKNMDGSYSPLKRKCVDTGMGVERTVAMLQGKPSVYNTEAFTSIIKSIEDISGVKYGDNEKTDTSIRIIADHVRTACFILGDPKTTLPSNIGAGYVLRRLIRRAVRHGKKLGIDGNFLSVPASAVIAQNAGFYTELKENETLILTELKAEEDKFLETLKKGEAEFEKMLPNLLKNPKKIIPGRMAFKLYDTYGFPIELTEELASESGLTVNREEFDEAFKKHQELSRAGSEQVFKGGLADHSEQTTAYHTATHLLHKALRMVLGDHVQQKGSNITAERLRFDFSHPEPMTEAEKKEVERLVNEAIKADLPVTMEVMPLEEAKKIGAMALFGEKYEDVVKVYKIGDFSTEVCGGPHVERTGSLGRFCIKKEQSSSSGVRRIRAVLEH.

Zn(2+) contacts are provided by His463, His467, Cys565, and His569.

It belongs to the class-II aminoacyl-tRNA synthetase family. Zn(2+) serves as cofactor.

It localises to the cytoplasm. The enzyme catalyses tRNA(Ala) + L-alanine + ATP = L-alanyl-tRNA(Ala) + AMP + diphosphate. In terms of biological role, catalyzes the attachment of alanine to tRNA(Ala) in a two-step reaction: alanine is first activated by ATP to form Ala-AMP and then transferred to the acceptor end of tRNA(Ala). Also edits incorrectly charged Ser-tRNA(Ala) and Gly-tRNA(Ala) via its editing domain. The sequence is that of Alanine--tRNA ligase (alaS) from Treponema denticola (strain ATCC 35405 / DSM 14222 / CIP 103919 / JCM 8153 / KCTC 15104).